A 718-amino-acid polypeptide reads, in one-letter code: Serine/threonine-protein kinase PAK 5 (718 aa).

Disordered stretches follow at residues 1 to 29 (MFGK…DPQE), 96 to 119 (RSNS…IQGH), 226 to 245 (SPLD…TSRC), 264 to 296 (YDRR…QEPM), and 339 to 371 (VFSP…SSSH). The CRIB domain occupies 11–24 (ISGPSNFEHRVHTG). The segment at 25-447 (FDPQEQKFTG…VVSPGDPREY (423 aa)) is linker. The residue at position 104 (serine 104) is a Phosphoserine. The residue at position 107 (threonine 107) is a Phosphothreonine. Polar residues predominate over residues 226-244 (SPLDYSFQLTPSRTAGTSR). The segment covering 359-371 (QSQSKVGYSSSSH) has biased composition (low complexity). The region spanning 448–699 (LDNFIKIGEG…AQELLGHPFL (252 aa)) is the Protein kinase domain. Residues 454–462 (IGEGSTGIV) and lysine 477 contribute to the ATP site. Aspartate 567 serves as the catalytic Proton acceptor.

This sequence belongs to the protein kinase superfamily. STE Ser/Thr protein kinase family. STE20 subfamily. As to quaternary structure, interacts tightly with GTP-bound but not GDP-bound CDC42/p21 and RAC1. Interacts with MARK2, leading to inhibit MARK2 independently of kinase activity. Interacts with RHOD and RHOH. Autophosphorylated when activated by CDC42/p21.

The protein resides in the mitochondrion. The protein localises to the cytoplasm. It localises to the nucleus. It catalyses the reaction L-seryl-[protein] + ATP = O-phospho-L-seryl-[protein] + ADP + H(+). It carries out the reaction L-threonyl-[protein] + ATP = O-phospho-L-threonyl-[protein] + ADP + H(+). Functionally, serine/threonine protein kinase that plays a role in a variety of different signaling pathways including cytoskeleton regulation, cell migration, proliferation or cell survival. Activation by various effectors including growth factor receptors or active CDC42 and RAC1 results in a conformational change and a subsequent autophosphorylation on several serine and/or threonine residues. Phosphorylates the proto-oncogene RAF and stimulates its kinase activity. Promotes cell survival by phosphorylating the BCL2 antagonist of cell death BAD. Phosphorylates CTNND1, probably to regulate cytoskeletal organization and cell morphology. Keeps microtubules stable through MARK2 inhibition and destabilizes the F-actin network leading to the disappearance of stress fibers and focal adhesions. In Rattus norvegicus (Rat), this protein is Serine/threonine-protein kinase PAK 5 (Pak5).